The sequence spans 450 residues: Tubulin alpha-5 chain (450 aa).

Gln-11, Glu-71, Gly-144, Thr-145, Thr-179, Asn-206, and Asn-228 together coordinate GTP. Glu-71 contributes to the Mg(2+) binding site. Glu-254 is a catalytic residue. Thr-349 bears the Phosphothreonine mark. The tract at residues 429–450 (EKDYEEVGAEGGDDEEDEGEDY) is disordered. Residues 431-450 (DYEEVGAEGGDDEEDEGEDY) are compositionally biased toward acidic residues.

Belongs to the tubulin family. As to quaternary structure, dimer of alpha and beta chains. A typical microtubule is a hollow water-filled tube with an outer diameter of 25 nm and an inner diameter of 15 nM. Alpha-beta heterodimers associate head-to-tail to form protofilaments running lengthwise along the microtubule wall with the beta-tubulin subunit facing the microtubule plus end conferring a structural polarity. Microtubules usually have 13 protofilaments but different protofilament numbers can be found in some organisms and specialized cells. Requires Mg(2+) as cofactor. In terms of processing, undergoes a tyrosination/detyrosination cycle, the cyclic removal and re-addition of a C-terminal tyrosine residue by the enzymes tubulin tyrosine carboxypeptidase (TTCP) and tubulin tyrosine ligase (TTL), respectively.

It localises to the cytoplasm. Its subcellular location is the cytoskeleton. It catalyses the reaction GTP + H2O = GDP + phosphate + H(+). Its function is as follows. Tubulin is the major constituent of microtubules, a cylinder consisting of laterally associated linear protofilaments composed of alpha- and beta-tubulin heterodimers. Microtubules grow by the addition of GTP-tubulin dimers to the microtubule end, where a stabilizing cap forms. Below the cap, tubulin dimers are in GDP-bound state, owing to GTPase activity of alpha-tubulin. This is Tubulin alpha-5 chain (TUBA5) from Arabidopsis thaliana (Mouse-ear cress).